Consider the following 256-residue polypeptide: Ribonuclease 3 (256 aa).

An RNase III domain is found at 3–125 (LDALQQRLGY…IVGAVFLDAG (123 aa)). E38 is a binding site for Mg(2+). The active site involves D42. Mg(2+) contacts are provided by D111 and E114. E114 is a catalytic residue. The DRBM domain maps to 152-222 (DAKTLLQEYL…AKLALDEVQK (71 aa)). The disordered stretch occupies residues 229–256 (KRSRAERTGKTRKQPQPQDPQLSLRLKE).

Belongs to the ribonuclease III family. Homodimer. The cofactor is Mg(2+).

It is found in the cytoplasm. It carries out the reaction Endonucleolytic cleavage to 5'-phosphomonoester.. Digests double-stranded RNA. Involved in the processing of primary rRNA transcript to yield the immediate precursors to the large and small rRNAs (23S and 16S). Processes some mRNAs, and tRNAs when they are encoded in the rRNA operon. Processes pre-crRNA and tracrRNA of type II CRISPR loci if present in the organism. This is Ribonuclease 3 from Cupriavidus taiwanensis (strain DSM 17343 / BCRC 17206 / CCUG 44338 / CIP 107171 / LMG 19424 / R1) (Ralstonia taiwanensis (strain LMG 19424)).